Consider the following 475-residue polypeptide: Ubiquilin-like protein (475 aa).

Positions 31–105 (TRVIVKTAGN…IYLVIKSKQG (75 aa)) constitute a Ubiquitin-like domain. Disordered regions lie at residues 113-138 (FRDLPTNDPCHRDRNTKGNSSRVHQP) and 305-325 (QVQSSPPPPPPSQEQQDQLTQ). Over residues 129-138 (KGNSSRVHQP) the composition is skewed to polar residues.

In Homo sapiens (Human), this protein is Ubiquilin-like protein (UBQLNL).